The following is a 218-amino-acid chain: Peptide deformylase 1 (218 aa).

Residues Cys126 and His168 each coordinate Fe cation. Residue Glu169 is part of the active site. Residue His172 participates in Fe cation binding.

It belongs to the polypeptide deformylase family. Fe(2+) is required as a cofactor.

The catalysed reaction is N-terminal N-formyl-L-methionyl-[peptide] + H2O = N-terminal L-methionyl-[peptide] + formate. Functionally, removes the formyl group from the N-terminal Met of newly synthesized proteins. Requires at least a dipeptide for an efficient rate of reaction. N-terminal L-methionine is a prerequisite for activity but the enzyme has broad specificity at other positions. This chain is Peptide deformylase 1, found in Streptomyces coelicolor (strain ATCC BAA-471 / A3(2) / M145).